Reading from the N-terminus, the 75-residue chain is Parvalbumin beta 3 (75 aa).

Alanine 1 is subject to N-acetylalanine. One can recognise an EF-hand domain in the interval 26–61 (YKAFFAKKAFFVIDQDKSGFIEEDELKLFLQVFSAG). Ca(2+) is bound by residues aspartate 39, aspartate 41, serine 43, phenylalanine 45, glutamate 47, and glutamate 50.

Belongs to the parvalbumin family.

In terms of biological role, in muscle, parvalbumin is thought to be involved in relaxation after contraction. It binds two calcium ions. In Merluccius gayi (South Pacific hake), this protein is Parvalbumin beta 3.